The sequence spans 92 residues: Putative protein IntG (92 aa).

This sequence belongs to the 'phage' integrase family.

In Escherichia coli (strain K12), this protein is Putative protein IntG (intG).